The primary structure comprises 383 residues: Lipid-A-disaccharide synthase (383 aa).

Belongs to the LpxB family.

It catalyses the reaction a lipid X + a UDP-2-N,3-O-bis[(3R)-3-hydroxyacyl]-alpha-D-glucosamine = a lipid A disaccharide + UDP + H(+). It participates in bacterial outer membrane biogenesis; LPS lipid A biosynthesis. In terms of biological role, condensation of UDP-2,3-diacylglucosamine and 2,3-diacylglucosamine-1-phosphate to form lipid A disaccharide, a precursor of lipid A, a phosphorylated glycolipid that anchors the lipopolysaccharide to the outer membrane of the cell. The sequence is that of Lipid-A-disaccharide synthase from Alcanivorax borkumensis (strain ATCC 700651 / DSM 11573 / NCIMB 13689 / SK2).